The sequence spans 252 residues: Protein A47 (252 aa).

This sequence belongs to the orthopoxvirus A47 protein family.

In Vaccinia virus (strain Western Reserve) (VACV), this protein is Protein A47.